A 408-amino-acid chain; its full sequence is Putative F-box protein At1g53550 (408 aa).

Residues 29–74 (TCYFDPIPVDLVINILSRLSLECIARCRCVSKLWSSIIRRPNYNQL) form the F-box domain.

This Arabidopsis thaliana (Mouse-ear cress) protein is Putative F-box protein At1g53550.